We begin with the raw amino-acid sequence, 436 residues long: 3-ketoacyl-CoA thiolase (436 aa).

C99 acts as the Acyl-thioester intermediate in catalysis. Residues H392 and C422 each act as proton acceptor in the active site.

It belongs to the thiolase-like superfamily. Thiolase family. As to quaternary structure, heterotetramer of two alpha chains (FadJ) and two beta chains (FadI).

The protein localises to the cytoplasm. It carries out the reaction an acyl-CoA + acetyl-CoA = a 3-oxoacyl-CoA + CoA. Its pathway is lipid metabolism; fatty acid beta-oxidation. In terms of biological role, catalyzes the final step of fatty acid oxidation in which acetyl-CoA is released and the CoA ester of a fatty acid two carbons shorter is formed. This is 3-ketoacyl-CoA thiolase from Shewanella loihica (strain ATCC BAA-1088 / PV-4).